A 318-amino-acid polypeptide reads, in one-letter code: Thymidylate synthase (318 aa).

DUMP contacts are provided by residues R25 and 180–181 (RR). The active-site Nucleophile is the C200. DUMP is bound by residues 220 to 223 (RSGD), N231, and 261 to 263 (HIY). D223 provides a ligand contact to (6R)-5,10-methylene-5,6,7,8-tetrahydrofolate. A317 lines the (6R)-5,10-methylene-5,6,7,8-tetrahydrofolate pocket.

This sequence belongs to the thymidylate synthase family. Bacterial-type ThyA subfamily. Homodimer.

It is found in the cytoplasm. The enzyme catalyses dUMP + (6R)-5,10-methylene-5,6,7,8-tetrahydrofolate = 7,8-dihydrofolate + dTMP. It functions in the pathway pyrimidine metabolism; dTTP biosynthesis. Functionally, catalyzes the reductive methylation of 2'-deoxyuridine-5'-monophosphate (dUMP) to 2'-deoxythymidine-5'-monophosphate (dTMP) while utilizing 5,10-methylenetetrahydrofolate (mTHF) as the methyl donor and reductant in the reaction, yielding dihydrofolate (DHF) as a by-product. This enzymatic reaction provides an intracellular de novo source of dTMP, an essential precursor for DNA biosynthesis. The polypeptide is Thymidylate synthase (Lactobacillus helveticus (strain DPC 4571)).